We begin with the raw amino-acid sequence, 349 residues long: Leucine-rich repeat-containing protein 58 (349 aa).

10 LRR repeats span residues 14 to 34 (NLTH…NKRK), 35 to 56 (DVQQ…VNSF), 58 to 80 (HLHL…LGLT), 81 to 102 (KLKT…KELG), 105 to 125 (RLEV…QFLQ), 128 to 149 (TLKS…IENL), 151 to 173 (SLEF…ANLP), 174 to 195 (YLSY…LAQV), 197 to 217 (SLRS…ILSL), and 219 to 239 (QLQE…RDLT).

In Xenopus tropicalis (Western clawed frog), this protein is Leucine-rich repeat-containing protein 58 (lrrc58).